The primary structure comprises 289 residues: Trimeric intracellular cation channel type B (289 aa).

The Lumenal segment spans residues 1–18 (MDVFAFFNLNELAFGLSK). The helical transmembrane segment at 19–36 (LPMFPYFDMAHYIISVMS) threads the bilayer. At 37–49 (LREQPGALCVSQR) the chain is on the cytoplasmic side. Residues 50–73 (SPLACWFSSMLYCFGGAVLSALML) traverse the membrane as a helical segment. Residues 74–85 (ADAPVAPLSNTT) lie on the Lumenal side of the membrane. Residues 86–103 (NLLLATLMWYLVFYCPLD) traverse the membrane as a helical segment. The Cytoplasmic portion of the chain corresponds to 104 to 107 (VVYS). Residues 108–125 (LASLLPLRLVLTAMKEVT) form a helical membrane-spanning segment. A 1,2-diacyl-sn-glycero-3-phospho-(1D-myo-inositol-4,5-bisphosphate) is bound by residues K122 and R126. Residues 126–144 (RTWKVLSGVSQAGSKYSDA) lie on the Lumenal side of the membrane. A helical membrane pass occupies residues 145-162 (LFVMVAVGWAKGAGGGLI). At 163-183 (SNFEQLVRGVWKPETNELLKM) the chain is on the cytoplasmic side. A helical transmembrane segment spans residues 184-201 (SYPTKVTLLGAVVFSLQQ). The Lumenal portion of the chain corresponds to 202–210 (CRYLPIQTH). The helical transmembrane segment at 211–230 (HLTFIYTLFTVTNKTRMMLL) threads the bilayer. The Cytoplasmic segment spans residues 231-289 (GSSSHPLSSLESFLYKTLFVRPLTDLSAEHTHSKHNGSVPEPTTAQTHTKEAEASKKTN). Residues 260–289 (HTHSKHNGSVPEPTTAQTHTKEAEASKKTN) are disordered. Positions 278-289 (HTKEAEASKKTN) are enriched in basic and acidic residues.

This sequence belongs to the TMEM38 family. In terms of assembly, homotrimer; conformation seems to be controled by binding to diacylglycerol (DAG).

The protein resides in the endoplasmic reticulum membrane. The catalysed reaction is K(+)(in) = K(+)(out). With respect to regulation, channel activity is activated by increased cytosolic Ca(2+) levels and blocked by luminal high Ca(2+) levels. Functionally, intracellular monovalent cation channel required for maintenance of rapid intracellular calcium release. Acts as a potassium counter-ion channel that functions in synchronization with calcium release from intracellular stores. Activated by increased cytosolic Ca(2+) levels. This is Trimeric intracellular cation channel type B (tmem38b) from Danio rerio (Zebrafish).